The following is a 211-amino-acid chain: Transmembrane protein 247 (211 aa).

2 stretches are compositionally biased toward basic and acidic residues: residues 1 to 10 and 31 to 45; these read MAMEDREVME and PEGK…EVPK. The tract at residues 1–90 is disordered; sequence MAMEDREVME…AGDGPGLESV (90 aa). A compositionally biased stretch (pro residues) spans 63–73; sequence PGPPRSLPPKS. Residues 119 to 148 adopt a coiled-coil conformation; that stretch reads KYLHQENERQRQHEEVMEQLQQQQQQQQAL. 2 helical membrane passes run 159-179 and 186-206; these read LLLP…IHII and VFFL…LCLI.

The protein resides in the membrane. This is Transmembrane protein 247 (Tmem247) from Mus musculus (Mouse).